Consider the following 241-residue polypeptide: MAVFLQLLPLLLSRAQGNPGASLDGRPGDRVNLSCGGVSHPIRWVWAPSFPACKGLSKGRRPILWASSSGTPTVPPLQPFVGRLRSLDSGIRRLELLLSAGDSGTFFCKGRHEDESRTVLHVLGDRTYCKAPGPTHGSVYPQLLIPLLGAGLVLGLGALGLVWWLHRRLPPQPIRPLPRFAPLVKTEPQRPVKEEEPKIPGDLDQEPSLLYADLDHLALSRPRRLSTADPADASTIYAVVV.

The N-terminal stretch at 1 to 17 (MAVFLQLLPLLLSRAQG) is a signal peptide. The Extracellular portion of the chain corresponds to 18–142 (NPGASLDGRP…GPTHGSVYPQ (125 aa)). Asn-32 carries an N-linked (GlcNAc...) asparagine glycan. A helical membrane pass occupies residues 143-163 (LLIPLLGAGLVLGLGALGLVW). Residues 164-241 (WLHRRLPPQP…DASTIYAVVV (78 aa)) lie on the Cytoplasmic side of the membrane. Short sequence motifs (ITIM motif) lie at residues 209 to 214 (LLYADL) and 235 to 240 (TIYAVV). Position 211 is a phosphotyrosine (Tyr-211).

Interacts (via ITIM motif) with PTPN6 and PTPN11. Binds to heparin. All isoforms are N-glycosylated. In terms of processing, isoform E is O-glycosylated. Post-translationally, phosphorylated. As to expression, expressed in platelets. Expressed in a restricted set of hematopoietic cell lines including the erythroleukemia cell line K-562 and the T-cell leukemia cell lines MOLT-4 and Jurkat. Not detected in the monocyte-like cell line U-937, the B-cell-like cell line Raji, the fibroblast cell lines TK and HeLa, or the natural killer cell lines NKL, NK 62 and YT.

The protein resides in the endoplasmic reticulum. Its subcellular location is the golgi apparatus. It is found in the cell membrane. Functionally, inhibitory receptor that acts as a critical regulator of hematopoietic lineage differentiation, megakaryocyte function and platelet production. Inhibits platelet aggregation and activation by agonists such as ADP and collagen-related peptide. This regulation of megakaryocate function as well as platelet production ann activation is done through the inhibition (via the 2 ITIM motifs) of the receptors CLEC1B and GP6:FcRgamma signaling. Appears to operate in a calcium-independent manner. In terms of biological role, isoform B, displayed in this entry, is the only isoform to contain both a transmembrane region and 2 immunoreceptor tyrosine-based inhibitor motifs (ITIMs) and, thus, the only one which probably has a role of inhibitory receptor. Isoform A may be the activating counterpart of isoform B. In Homo sapiens (Human), this protein is Megakaryocyte and platelet inhibitory receptor G6b.